The primary structure comprises 156 residues: Small ribosomal subunit protein bS16 (156 aa).

Residues 114-156 (ENEPVAEAITPKKKKAAKADEAKAEDTAADAEAPAADAEAADK) form a disordered region. The span at 130–139 (AKADEAKAED) shows a compositional bias: basic and acidic residues. A compositionally biased stretch (low complexity) spans 143–156 (DAEAPAADAEAADK).

It belongs to the bacterial ribosomal protein bS16 family.

This Rhodococcus erythropolis (strain PR4 / NBRC 100887) protein is Small ribosomal subunit protein bS16.